Consider the following 332-residue polypeptide: Capsular polysaccharide phosphotransferase WcwK (332 aa).

Belongs to the stealth family.

This chain is Capsular polysaccharide phosphotransferase WcwK (wcwK), found in Streptococcus pneumoniae.